The primary structure comprises 289 residues: Light-independent protochlorophyllide reductase iron-sulfur ATP-binding protein (289 aa).

Residues 10–15 and Lys39 contribute to the ATP site; that span reads GIGKST. Mg(2+) is bound at residue Ser14. Residues Cys95 and Cys129 each contribute to the [4Fe-4S] cluster site. 180-181 provides a ligand contact to ATP; it reads NR.

This sequence belongs to the NifH/BchL/ChlL family. Homodimer. Protochlorophyllide reductase is composed of three subunits; ChlL, ChlN and ChlB. Requires [4Fe-4S] cluster as cofactor.

It localises to the plastid. The protein localises to the chloroplast. The enzyme catalyses chlorophyllide a + oxidized 2[4Fe-4S]-[ferredoxin] + 2 ADP + 2 phosphate = protochlorophyllide a + reduced 2[4Fe-4S]-[ferredoxin] + 2 ATP + 2 H2O. The protein operates within porphyrin-containing compound metabolism; chlorophyll biosynthesis (light-independent). Functionally, component of the dark-operative protochlorophyllide reductase (DPOR) that uses Mg-ATP and reduced ferredoxin to reduce ring D of protochlorophyllide (Pchlide) to form chlorophyllide a (Chlide). This reaction is light-independent. The L component serves as a unique electron donor to the NB-component of the complex, and binds Mg-ATP. The sequence is that of Light-independent protochlorophyllide reductase iron-sulfur ATP-binding protein from Tetradesmus obliquus (Green alga).